A 270-amino-acid chain; its full sequence is Acetyl-coenzyme A carboxylase carboxyl transferase subunit beta (270 aa).

The region spanning 16–270 is the CoA carboxyltransferase N-terminal domain; that stretch reads LFAKCPACKH…KLLAFHGGSK (255 aa). Zn(2+) contacts are provided by cysteine 20, cysteine 23, cysteine 38, and cysteine 41. A C4-type zinc finger spans residues 20–41; the sequence is CPACKHMIYQKDLGLEKICPKC.

The protein belongs to the AccD/PCCB family. Acetyl-CoA carboxylase is a heterohexamer composed of biotin carboxyl carrier protein (AccB), biotin carboxylase (AccC) and two subunits each of ACCase subunit alpha (AccA) and ACCase subunit beta (AccD). Zn(2+) serves as cofactor.

It localises to the cytoplasm. The enzyme catalyses N(6)-carboxybiotinyl-L-lysyl-[protein] + acetyl-CoA = N(6)-biotinyl-L-lysyl-[protein] + malonyl-CoA. It participates in lipid metabolism; malonyl-CoA biosynthesis; malonyl-CoA from acetyl-CoA: step 1/1. Functionally, component of the acetyl coenzyme A carboxylase (ACC) complex. Biotin carboxylase (BC) catalyzes the carboxylation of biotin on its carrier protein (BCCP) and then the CO(2) group is transferred by the transcarboxylase to acetyl-CoA to form malonyl-CoA. The chain is Acetyl-coenzyme A carboxylase carboxyl transferase subunit beta from Streptococcus mutans serotype c (strain NN2025).